The sequence spans 415 residues: Squalene synthase 1 (415 aa).

2 helical membrane-spanning segments follow: residues 281–301 and 391–411; these read AIFRFCAIPQIMAIGTLALCF and LIAIIFIILAILYAYLSSNLL.

Belongs to the phytoene/squalene synthase family. It depends on Mg(2+) as a cofactor. Mn(2+) serves as cofactor. As to expression, mostly expressed in the shoot apex (buds) and roots, and, to a lower extent, in stems, leaves, flowers and seeds.

The protein resides in the endoplasmic reticulum membrane. It catalyses the reaction 2 (2E,6E)-farnesyl diphosphate + NADH + H(+) = squalene + 2 diphosphate + NAD(+). The catalysed reaction is 2 (2E,6E)-farnesyl diphosphate + NADPH + H(+) = squalene + 2 diphosphate + NADP(+). The protein operates within terpene metabolism; lanosterol biosynthesis; lanosterol from farnesyl diphosphate: step 1/3. In terms of biological role, component of the triterpene saponins (e.g. ginsenosides or panaxosides) and phytosterols biosynthetic pathways. Catalyzes the biosynthesis of squalene. In Panax ginseng (Korean ginseng), this protein is Squalene synthase 1.